Here is a 278-residue protein sequence, read N- to C-terminus: Deoxyuridine 5'-triphosphate nucleotidohydrolase (278 aa).

Substrate is bound by residues 171–173 (RSG) and 273–274 (FG).

This sequence belongs to the dUTPase family. Mg(2+) is required as a cofactor.

The enzyme catalyses dUTP + H2O = dUMP + diphosphate + H(+). Its function is as follows. Involved in nucleotide metabolism: produces dUMP, the immediate precursor of thymidine nucleotides and decreases the intracellular concentration of dUTP to avoid uracil incorporation into viral DNA. This Homo sapiens (Human) protein is Deoxyuridine 5'-triphosphate nucleotidohydrolase.